The following is a 158-amino-acid chain: 3-hydroxyacyl-[acyl-carrier-protein] dehydratase FabZ (158 aa).

H57 is an active-site residue.

It belongs to the thioester dehydratase family. FabZ subfamily.

It localises to the cytoplasm. The enzyme catalyses a (3R)-hydroxyacyl-[ACP] = a (2E)-enoyl-[ACP] + H2O. Its function is as follows. Involved in unsaturated fatty acids biosynthesis. Catalyzes the dehydration of short chain beta-hydroxyacyl-ACPs and long chain saturated and unsaturated beta-hydroxyacyl-ACPs. This is 3-hydroxyacyl-[acyl-carrier-protein] dehydratase FabZ from Anaeromyxobacter sp. (strain Fw109-5).